The primary structure comprises 374 residues: Peptide chain release factor 2 (374 aa).

N5-methylglutamine is present on Gln256.

The protein belongs to the prokaryotic/mitochondrial release factor family. Methylated by PrmC. Methylation increases the termination efficiency of RF2.

Its subcellular location is the cytoplasm. In terms of biological role, peptide chain release factor 2 directs the termination of translation in response to the peptide chain termination codons UGA and UAA. In Mycobacterium leprae (strain Br4923), this protein is Peptide chain release factor 2.